The sequence spans 814 residues: Rho GTPase-activating protein 26 (814 aa).

Residues 7 to 262 form the BAR domain; sequence EFSDCCLDSP…MKENPLEHKT (256 aa). Residues 265–369 enclose the PH domain; it reads PYTMEGYLYV…WMEAMDGREP (105 aa). The Rho-GAP domain occupies 383–568; that stretch reads AQLDSIGFSI…ILIENHEKIF (186 aa). Positions 624–648 are enriched in low complexity; it reads LESVSSNPNSILNSSSSLQPNMNSS. Residues 624–696 form a disordered region; the sequence is LESVSSNPNS…MPTSSTSSDS (73 aa). Pro residues predominate over residues 662–672; it reads SLPPNPSPTSP. Residue Ser668 is modified to Phosphoserine. Position 670 is a phosphothreonine (Thr670). A Phosphoserine modification is found at Ser671. Over residues 673–696 the composition is skewed to low complexity; sequence LSPSWPMFSAPSSPMPTSSTSSDS. The 59-residue stretch at 756–814 folds into the SH3 domain; the sequence is TPFRKAKALYACKAEHDSELSFTAGTVFDNVHPSQEPGWLEGTLNGKTGLIPENYVEFL.

As to quaternary structure, interacts with NYAP1, NYAP2 and MYO16. Interacts with MICAL1 and WDR44. Binds to the C-terminus of PTK2/FAK1. In terms of assembly, (Microbial infection) Interacts with human parainfluenza virus type 2 proteins P and V. In terms of processing, phosphorylated in a PINK1-dependent fashion promoting retrograde mitochondrial trafficking and clustering.

Its subcellular location is the endosome membrane. It localises to the cytoplasm. It is found in the cell junction. The protein localises to the focal adhesion. The protein resides in the cytoskeleton. In terms of biological role, GTPase-activating protein for RHOA and CDC42. Facilitates mitochondrial quality control by promoting Parkin-mediated recruitment of autophagosomes to damaged mitochondria. Negatively regulates the growth of human parainfluenza virus type 2 by inhibiting hPIV-2-mediated RHOA activation via interaction with two of its viral proteins P and V. Associates with MICAL1 on the endosomal membrane to promote Rab8-Rab10-dependent tubule extension. After dissociation of MICAL1, recruits WDR44 which connects the endoplasmic reticulum (ER) with the endosomal tubule, thereby participating in the export of a subset of neosynthesized proteins. The sequence is that of Rho GTPase-activating protein 26 (ARHGAP26) from Homo sapiens (Human).